A 685-amino-acid polypeptide reads, in one-letter code: Sodium-dependent phosphate transporter 1 (685 aa).

The next 6 helical transmembrane spans lie at 25-45, 66-86, 106-126, 162-182, 201-221, and 234-254; these read FLWM…SVGA, ACIL…AKVS, LMAG…AASF, IVLS…LLFY, ALPI…MYSG, and GIIL…WFFV. Over residues 482–492 the composition is skewed to acidic residues; that stretch reads VEAEEQEEGSI. Positions 482–513 are disordered; the sequence is VEAEEQEEGSIEDVATDRKSSSSSLEERHDQD. Basic and acidic residues predominate over residues 496–513; that stretch reads ATDRKSSSSSLEERHDQD. The next 4 helical transmembrane spans lie at 517-537, 565-585, 606-626, and 656-676; these read VSLL…FAHG, ATPI…LWVW, FSIE…GLPI, and IFLA…AIMA.

It belongs to the inorganic phosphate transporter (PiT) (TC 2.A.20) family.

The protein localises to the cell membrane. The enzyme catalyses 2 Na(+)(out) + phosphate(out) = 2 Na(+)(in) + phosphate(in). Its function is as follows. Sodium-phosphate symporter which preferentially transports the monovalent form of phosphate with a stoichiometry of two sodium ions per phosphate ion. In Xenopus tropicalis (Western clawed frog), this protein is Sodium-dependent phosphate transporter 1 (slc20a1).